The chain runs to 284 residues: MLSKQIPLGIYEKALPAGECWLERLQLAKTLGFDFVEMSVDETDERLSRLDWSREQRLALVNAIVETGVRVPSMCLSAHRRFPLGSEDDAVRAQGLEIMRKAIQFAQDVGIRVIQLAGYDVYYQEANNETRRRFRDGLKESVEMASRAQVTLAMEIMDYPLMNSISKALGYAHYLNNPWFQLYPDIGNLSAWDNDVQMELQAGIGHIVAVHVKDTKPGVFKNVPFGEGVVDFERCFETLKQSGYCGPYLIEMWSETAEDPAAEVAKARDWVKARMAKAGMVEAA.

Belongs to the L-ribulose-5-phosphate 3-epimerase family.

It catalyses the reaction L-ribulose 5-phosphate = L-xylulose 5-phosphate. The protein operates within cofactor degradation; L-ascorbate degradation; D-xylulose 5-phosphate from L-ascorbate: step 3/4. Functionally, catalyzes the isomerization of L-xylulose-5-phosphate to L-ribulose-5-phosphate. Is involved in the anaerobic L-ascorbate utilization. The polypeptide is L-ribulose-5-phosphate 3-epimerase UlaE (Escherichia coli O139:H28 (strain E24377A / ETEC)).